The chain runs to 370 residues: Putrescine-binding periplasmic protein PotF (370 aa).

An N-terminal signal peptide occupies residues 1–26 (MTALNKKWLSGLVAGALMAVSVGTLA). Residue Ser-38 participates in putrescine binding. An intrachain disulfide couples Cys-175 to Cys-239. Residues Asp-247 and Asp-278 each coordinate putrescine.

This sequence belongs to the bacterial solute-binding protein PotD/PotF family. The complex is composed of two ATP-binding proteins (PotG), two transmembrane proteins (PotH and PotI) and a solute-binding protein (PotF).

The protein localises to the periplasm. With respect to regulation, transport is feedback inhibited by intracellular polyamines. In terms of biological role, part of the ABC transporter complex PotFGHI involved in putrescine uptake. Binds putrescine. Imports putrescine for maintenance of the optimal concentration of polyamines necessary for cell growth in the presence of glucose. This chain is Putrescine-binding periplasmic protein PotF, found in Escherichia coli (strain K12).